A 29-amino-acid polypeptide reads, in one-letter code: Dermaseptin-1 (29 aa).

Val29 bears the Valine amide mark.

In terms of tissue distribution, expressed by the skin glands.

Its subcellular location is the secreted. Its function is as follows. Antimicrobial peptide, active against the Gram-positive bacterium S.aureus, the Gram-negative bacteria E.coli and P.aeruginosa, and the yeasts C.albicans and P.brasiliensis. Has hemolytic activity (40% hemolysis at 128 ug/ml). This chain is Dermaseptin-1, found in Phyllomedusa tarsius (Brownbelly leaf frog).